The sequence spans 119 residues: Large ribosomal subunit protein bL20 (119 aa).

The protein belongs to the bacterial ribosomal protein bL20 family.

In terms of biological role, binds directly to 23S ribosomal RNA and is necessary for the in vitro assembly process of the 50S ribosomal subunit. It is not involved in the protein synthesizing functions of that subunit. The polypeptide is Large ribosomal subunit protein bL20 (Thermoanaerobacter pseudethanolicus (strain ATCC 33223 / 39E) (Clostridium thermohydrosulfuricum)).